Consider the following 447-residue polypeptide: Delta(5) fatty acid desaturase fat-4 (447 aa).

A Cytochrome b5 heme-binding domain is found at 1–80 (MVLREQEHEP…TQEPEIPDIK (80 aa)). A run of 4 helical transmembrane segments spans residues 137–157 (IFTILFAFYLQYHTYYLPSAI), 257–277 (WTFMLPFLRLSWLLQSIIFVS), 292–312 (IYEQVGLSLHWAWSLGQLYFL), and 319–339 (IMFFLVSHLVGGFLLSHVVTF).

The protein belongs to the fatty acid desaturase type 1 family.

It localises to the membrane. It catalyses the reaction (11Z,14Z)-eicosadienoyl-CoA + 2 Fe(II)-[cytochrome b5] + O2 + 2 H(+) = (5Z,11Z,14Z)-eicosatrienoyl-CoA + 2 Fe(III)-[cytochrome b5] + 2 H2O. It carries out the reaction (11Z,14Z,17Z)-eicosatrienoyl-CoA + 2 Fe(II)-[cytochrome b5] + O2 + 2 H(+) = (5Z,11Z,14Z,17Z)-eicosatetraenoyl-CoA + 2 Fe(III)-[cytochrome b5] + 2 H2O. The catalysed reaction is (8Z,11Z,14Z,17Z)-eicosatetraenoyl-CoA + 2 Fe(II)-[cytochrome b5] + O2 + 2 H(+) = (5Z,8Z,11Z,14Z,17Z)-eicosapentaenoyl-CoA + 2 Fe(III)-[cytochrome b5] + 2 H2O. The enzyme catalyses (8Z,11Z,14Z)-eicosatrienoyl-CoA + 2 Fe(II)-[cytochrome b5] + O2 + 2 H(+) = (5Z,8Z,11Z,14Z)-eicosatetraenoyl-CoA + 2 Fe(III)-[cytochrome b5] + 2 H2O. It participates in lipid metabolism; polyunsaturated fatty acid biosynthesis. Can function as a Delta(5) fatty acid desaturase and behaves as a (8-3) desaturase. Introduces a double bond in the fatty acid chain 5 carbons away from carboxy terminal to biosynthesize polyunsaturated fatty acids (PUFAs) endogenously (PUFAs are essential for membrane structure and many cellular and physiological processes). Acts on a variety of substrates such as dihomo-gamma-linoleoyl-CoA ((8Z,11Z,14Z)-eicosatrienoyl-CoA, 20:3n-6) to generate arachidonoyl-CoA ((5Z,8Z,11Z,14Z)-eicosatetraenoyl-CoA, 20:4n-6). Also acts on a number of other substrates, including fatty acids that do not contain a double bond at the 8 position like (11Z,14Z,17Z)-eicosatrienoyl-CoA (20:3n-3) to produce (5Z,11Z,14Z,17Z)-eicosatetraenoyl-CoA (20:4n-3). Unlike plants, Caenorhabditis elegans desaturases seem to use fatty acyl-CoAs as substrates. The sequence is that of Delta(5) fatty acid desaturase fat-4 (fat-4) from Caenorhabditis elegans.